A 150-amino-acid chain; its full sequence is Large ribosomal subunit protein bL9 (150 aa).

The protein belongs to the bacterial ribosomal protein bL9 family.

Functionally, binds to the 23S rRNA. The sequence is that of Large ribosomal subunit protein bL9 from Shewanella baltica (strain OS223).